The sequence spans 470 residues: MDFRIRVYNSLGRKLEEFGTVEPNLVKMYVCGPTVYDYVHIGHGRTFVVFDAISRYLRLRGYTVIRVQNITDIDDKIIKKSQEIGKDWNEIVDYFTKDYLDMLSQLKVKIDIHPRVTQHIREIIDFVQRLIDKGHAYVAPSGSVYFDVDTYPNYGELSNTKKEEWNQGEEFVKEKKHSYDFALWKAWKPGEPYWESPWGKGRPGWHIECSTMSTRYLGERFDIHGGGADLIFPHHENERAQTEALIGEKWVTYWVHSAFVTIRKEKMSKSLGNIIPLNEAIKKWGPSVLRYWYLTSHYRSPIDFSEEALEQAKSALQRIKDSMAIIRDVISEGPKFYVKDDDIKVYREILNNLNNFHTAMSNDFDTSTALSYIHEIVRLVFSTLQYSRDFLGAMLAFETLKQFNEVFGVMDEEFYPTYDKMYKIIDAVVDIRNQLRQMKLYEISDKIREELLKAGVRILDSKDKSTWRFE.

Cys-31 lines the Zn(2+) pocket. Positions 33-43 (PTVYDYVHIGH) match the 'HIGH' region motif. Zn(2+) contacts are provided by Cys-209, His-234, and Glu-238. A 'KMSKS' region motif is present at residues 266 to 270 (KMSKS). Lys-269 provides a ligand contact to ATP.

The protein belongs to the class-I aminoacyl-tRNA synthetase family. Requires Zn(2+) as cofactor.

It localises to the cytoplasm. It catalyses the reaction tRNA(Cys) + L-cysteine + ATP = L-cysteinyl-tRNA(Cys) + AMP + diphosphate. The protein is Cysteine--tRNA ligase of Saccharolobus solfataricus (strain ATCC 35092 / DSM 1617 / JCM 11322 / P2) (Sulfolobus solfataricus).